The chain runs to 350 residues: Sodium/calcium exchanger MaX1 (350 aa).

The next 10 membrane-spanning stretches (helical) occupy residues 4–24 (VNFL…DYFV), 39–59 (FVIG…ASSI), 69–89 (IVIG…VGVA), 101–121 (MLKR…VFAF), 125–145 (LSML…FFLF), 202–222 (GGFA…VIGA), 242–264 (VIGT…VSAA), 276–296 (VIGS…LFYP), 302–322 (MSLF…LIFI), and 330–350 (RWEG…LFYI).

The protein belongs to the Ca(2+):cation antiporter (CaCA) (TC 2.A.19) family.

It is found in the cell membrane. Calcium transport is inhibited by Na(+), K(+), Li(+), Mg(2+) or Mn(2+). Functionally, catalyzes Na(+)/Ca(2+) exchange. The transport is electrogenic with a likely stoichiometry of 3 or more Na(+) for each Ca(2+). Is K(+)-independent. This is Sodium/calcium exchanger MaX1 (maX1) from Methanosarcina acetivorans (strain ATCC 35395 / DSM 2834 / JCM 12185 / C2A).